The following is a 951-amino-acid chain: Sodium/potassium exporting P-type ATPase 1 (951 aa).

Over 1–57 (MMGANSTEWHGQSVEQVTELLGTDVERGLKESVVGQLQKQFGPNELKGQRGVNPWKV) the chain is Cytoplasmic. The chain crosses the membrane as a helical span at residues 58–78 (LLAQFTNGLTVILLIATVVSF). Residues 79-82 (AVQD) are Extracellular-facing. Residues 83 to 103 (HAEGGVLAFVIIFNASVGFVQ) traverse the membrane as a helical segment. Residues 104–247 (EYRAEKTMDA…TPMQKRLNRM (144 aa)) are Cytoplasmic-facing. Residues 248-268 (AYILFGISLVLAVIVFAVNKF) form a helical membrane-spanning segment. Residues 269–273 (EFNTD) are Extracellular-facing. Residues 274–294 (IIIYAVSLGIAVIPEGLIAVI) form a helical membrane-spanning segment. The Cytoplasmic portion of the chain corresponds to 295–717 (TIVMALGVRR…GRRIFSNIRK (423 aa)). D330 serves as the catalytic 4-aspartylphosphate intermediate. The Mg(2+) site is built by D330 and T332. The ATP site is built by T332, E414, K467, R511, T575, G576, D577, R636, and K642. Residue D661 coordinates Mg(2+). N664 contributes to the ATP binding site. Residues 718–738 (FILHLVSTNVGEVIVLIIGLA) traverse the membrane as a helical segment. Topologically, residues 739-743 (FKDRN) are extracellular. A helical transmembrane segment spans residues 744–764 (GVSVFPLAPVQILFMNMVTST). The Cytoplasmic segment spans residues 765–799 (PPAMALGVEAASKDTMKVPPHTKGLFGKEVLADMM). Residues 800-820 (VYGIIMGSLILVDWVLVIYAF) form a helical membrane-spanning segment. At 821 to 840 (GDSQLGLECNSDRMLNECNT) the chain is on the extracellular side. The helical transmembrane segment at 841–861 (VFRARSTIMVALIWMLLLHAY) threads the bilayer. At 862 to 885 (NCRHPRASLFTAEGGGASKLFSNR) the chain is on the cytoplasmic side. Residues 886-906 (LLVWSVLLGSLMPIPTVYIPT) traverse the membrane as a helical segment. The Extracellular segment spans residues 907-916 (LNTKIFKQET). A helical membrane pass occupies residues 917-937 (ISWEWSIVVVSVVAFFFLSEL). The Cytoplasmic portion of the chain corresponds to 938 to 951 (YKLIKRNVMTSRVI).

This sequence belongs to the cation transport ATPase (P-type) (TC 3.A.3) family. Type IID subfamily. Requires Mg(2+) as cofactor. Post-translationally, the active site is phosphorylated in presence of sodium or potassium and in conditions of higher pH. Not phosphorylated in presence of calcium ions.

It localises to the cell membrane. It carries out the reaction Na(+)(in) + ATP + H2O = Na(+)(out) + ADP + phosphate + H(+). It catalyses the reaction K(+)(in) + ATP + H2O = K(+)(out) + ADP + phosphate + H(+). Functionally, catalyzes the hydrolysis of ATP coupled with the export of sodium and potassium from the cell. Appears to export potassium more efficiently than sodium. May transport other cations such as lithium. Sodium/potassium efflux ATPases are involved in salt tolerance and maintaining the membrane potential across the plasma membrane in high salinity (Na+) or alkaline (K+) environments. This is Sodium/potassium exporting P-type ATPase 1 from Marchantia polymorpha (Common liverwort).